Here is a 131-residue protein sequence, read N- to C-terminus: Profilin-1 (131 aa).

Residues C13 and C115 are joined by a disulfide bond. The Involved in PIP2 interaction motif lies at 81-97 (AVIRGKKGSGGITVKKT). The residue at position 111 (T111) is a Phosphothreonine.

The protein belongs to the profilin family. Multimer. Occurs in many kinds of cells as a complex with monomeric actin in a 1:1 ratio. In terms of processing, phosphorylated by MAP kinases. In terms of tissue distribution, pollen specific.

It localises to the cytoplasm. Its subcellular location is the cytoskeleton. Binds to actin and affects the structure of the cytoskeleton. At high concentrations, profilin prevents the polymerization of actin, whereas it enhances it at low concentrations. By binding to PIP2, it inhibits the formation of IP3 and DG. This Zea mays (Maize) protein is Profilin-1 (PRO1).